Consider the following 381-residue polypeptide: Flap endonuclease 1 (381 aa).

Positions 1–105 are N-domain; sequence MGIKGLNSII…HELDKRTSRR (105 aa). D34 serves as a coordination point for Mg(2+). Positions 47 and 71 each coordinate DNA. Mg(2+) contacts are provided by D87, E156, E158, D177, and D179. Positions 120–251 are I-domain; that stretch reads EKMKHERRLV…VTALKLMKEH (132 aa). E156 contributes to the DNA binding site. 2 residues coordinate DNA: G229 and D231. D231 is a Mg(2+) binding site. The segment at 338–346 is interaction with PCNA; it reads VQGRLDGFF.

The protein belongs to the XPG/RAD2 endonuclease family. FEN1 subfamily. Interacts with PCNA. Three molecules of FEN1 bind to one PCNA trimer with each molecule binding to one PCNA monomer. PCNA stimulates the nuclease activity without altering cleavage specificity. Requires Mg(2+) as cofactor. Post-translationally, phosphorylated. Phosphorylation upon DNA damage induces relocalization to the nuclear plasma.

Its subcellular location is the nucleus. It localises to the nucleolus. The protein localises to the nucleoplasm. The protein resides in the mitochondrion. In terms of biological role, structure-specific nuclease with 5'-flap endonuclease and 5'-3' exonuclease activities involved in DNA replication and repair. During DNA replication, cleaves the 5'-overhanging flap structure that is generated by displacement synthesis when DNA polymerase encounters the 5'-end of a downstream Okazaki fragment. It enters the flap from the 5'-end and then tracks to cleave the flap base, leaving a nick for ligation. Also involved in the long patch base excision repair (LP-BER) pathway, by cleaving within the apurinic/apyrimidinic (AP) site-terminated flap. Acts as a genome stabilization factor that prevents flaps from equilibrating into structures that lead to duplications and deletions. Also possesses 5'-3' exonuclease activity on nicked or gapped double-stranded DNA, and exhibits RNase H activity. Also involved in replication and repair of rDNA and in repairing mitochondrial DNA. The sequence is that of Flap endonuclease 1 from Candida glabrata (strain ATCC 2001 / BCRC 20586 / JCM 3761 / NBRC 0622 / NRRL Y-65 / CBS 138) (Yeast).